A 598-amino-acid chain; its full sequence is MFS siderochrome iron transporter D (598 aa).

The tract at residues 1-34 is disordered; it reads MLSSWQKKFFQTPEHPPAEGIAPPRDDGVPNPEP. Over 1-76 the chain is Cytoplasmic; sequence MLSSWQKKFF…AEAITLTWSK (76 aa). The helical transmembrane segment at 77–97 threads the bilayer; sequence ISLGAAYFLMWLLYLVNGFQA. The Extracellular portion of the chain corresponds to 98-115; sequence SITGNLSAYVTSGFESHS. A glycan (N-linked (GlcNAc...) asparagine) is linked at N102. A helical membrane pass occupies residues 116 to 136; sequence LIPVISIVSSVMSAATYMPLA. The Cytoplasmic portion of the chain corresponds to 137–144; the sequence is KVLNLWDR. Residues 145 to 165 traverse the membrane as a helical segment; the sequence is SIGFIIMVAFATLGLILSATC. The Extracellular segment spans residues 166–171; sequence HDIGTY. Residues 172 to 192 form a helical membrane-spanning segment; that stretch reads CAAQVFYSIGFAGIIFSVDVI. Residues 193 to 203 lie on the Cytoplasmic side of the membrane; sequence TADTSTLRDRG. Residues 204–224 form a helical membrane-spanning segment; sequence LAYAFTSSPYIITAFGGPAAA. At 225 to 233 the chain is on the extracellular side; the sequence is EHFYDSNWR. A helical membrane pass occupies residues 234-254; it reads WAYGCFSIVLPVVALPMFCLL. Residues 255-289 lie on the Cytoplasmic side of the membrane; sequence RWNRHKAKKSGLLKDKADSGRTWMESIRHYIIEFD. The chain crosses the membrane as a helical span at residues 290–310; sequence ILGVFFLAAGLVLFLLPFSIA. The Extracellular segment spans residues 311–318; that stretch reads GSTEDDWK. A helical membrane pass occupies residues 319 to 339; the sequence is SASIITMLVIGFVCLLVFALV. Residues 340–341 lie on the Cytoplasmic side of the membrane; it reads ER. A helical transmembrane segment spans residues 342-362; that stretch reads FVAPVPFLPWALLASRTVLGA. At 363–396 the chain is on the extracellular side; that stretch reads CMLDVCYQIAYYCWFNYYTSYLQVVYGTSITTAG. Residues 397 to 417 traverse the membrane as a helical segment; it reads YITSIFDVVSGVWLFIVGFLI. Residues 418–424 are Cytoplasmic-facing; the sequence is KKTNRFR. A helical membrane pass occupies residues 425 to 445; the sequence is WLLFIAVPLYILGVGLMIYFR. Over 446 to 450 the chain is Extracellular; sequence KPSWS. A helical membrane pass occupies residues 451 to 471; that stretch reads VGYMIMCQIFIAFAGGTMIIC. At 472–490 the chain is on the cytoplasmic side; it reads QQVAVLAASDHDHAASSLA. The chain crosses the membrane as a helical span at residues 491 to 511; it reads FLNVFGTMGSAVGSSISGAIW. At 512 to 562 the chain is on the extracellular side; sequence THTLPGALQRLLPDSVKADWQTIYDSLEEQLSYERGTLIRQAIALAYASTQ. Residues 563–583 form a helical membrane-spanning segment; the sequence is SKMLIAGTAIMALSLVWMFVI. At 584–598 the chain is on the cytoplasmic side; sequence RDIKLTKTQTKGVLF.

It belongs to the major facilitator superfamily.

Its subcellular location is the cell membrane. In terms of biological role, major facilitator transporter involved in fusarinine C (FsC) uptake. In contrast to TAFC-mediated iron uptake, FsC-mediated iron uptake via mirD does not play a significant role during infection. The sequence is that of MFS siderochrome iron transporter D from Aspergillus fumigatus (strain ATCC MYA-4609 / CBS 101355 / FGSC A1100 / Af293) (Neosartorya fumigata).